The chain runs to 353 residues: C-X-C chemokine receptor type 4 (353 aa).

The important for chemokine binding and signaling stretch occupies residues 1-22 (MDGFRIFTSDNYTEDDLGSGDY). Residues 1–39 (MDGFRIFTSDNYTEDDLGSGDYDSIKEPCFREENAHFNR) are Extracellular-facing. N-linked (GlcNAc...) asparagine glycosylation occurs at asparagine 11. Sulfotyrosine is present on tyrosine 12. O-linked (Xyl...) (chondroitin sulfate) serine glycosylation is present at serine 19. Position 22 is a sulfotyrosine (tyrosine 22). 2 cysteine pairs are disulfide-bonded: cysteine 29/cysteine 275 and cysteine 110/cysteine 187. A helical transmembrane segment spans residues 40–64 (IFLPTVYSIIFLTGIVGNGLVILVM). Topologically, residues 65 to 78 (GYQKKLRSMTDKYR) are cytoplasmic. A helical membrane pass occupies residues 79 to 100 (LHLSVADLLFVLTLPFWAVDAV). The tract at residues 95-98 (WAVD) is chemokine binding. Residues 101-111 (ANWYFGKFLCK) lie on the Extracellular side of the membrane. Residues 112 to 131 (AVHVIYTVNLYSSVLILAFI) traverse the membrane as a helical segment. The chemokine binding stretch occupies residues 114-118 (HVIYT). Topologically, residues 132 to 155 (SLDRYLAIVHATNSQRPRKLLAEK) are cytoplasmic. The short motif at 134–136 (DRY) is the Important for signaling element. The interval 136 to 148 (YLAIVHATNSQRP) is involved in dimerization; when bound to chemokine. The chain crosses the membrane as a helical span at residues 156 to 175 (VVYVGVWIPALLLTIPDFIF). Residues 176 to 196 (ANVREGDGRYICDRFYPNDLW) lie on the Extracellular side of the membrane. The interval 187-191 (CDRFY) is chemokine binding, important for signaling. Residues 192-211 (PNDLWLVVFQFQHIMVGLIL) are involved in dimerization. The chain crosses the membrane as a helical span at residues 197 to 217 (LVVFQFQHIMVGLILPGIVIL). Over 218–242 (SCYCIIISKLSHSKGYQKRKALKTT) the chain is Cytoplasmic. Residues 243 to 262 (VILILAFFACWLPYYIGISI) traverse the membrane as a helical segment. At 263 to 283 (DSFILLEIIQQGCEFESTVHK) the chain is on the extracellular side. An involved in dimerization region spans residues 267-269 (LLE). A helical membrane pass occupies residues 284–303 (WISITEALAFFHCCLNPILY). Over 304-353 (AFLGAKFKTSAQHALTSVSRGSSLKILSKGKRGGHSSVSTESESSSFHSS) the chain is Cytoplasmic. A phosphoserine mark is found at serine 320 and serine 322. Phosphoserine; by PKC and GRK6 occurs at positions 325 and 326. Residues 330–353 (LSKGKRGGHSSVSTESESSSFHSS) are disordered. Phosphoserine; by GRK6 is present on serine 331. Lysine 332 participates in a covalent cross-link: Glycyl lysine isopeptide (Lys-Gly) (interchain with G-Cter in ubiquitin). Residues 338–353 (HSSVSTESESSSFHSS) are compositionally biased toward low complexity. Serine 340 carries the post-translational modification Phosphoserine; by GRK6. Residues serine 349 and serine 352 each carry the phosphoserine modification.

It belongs to the G-protein coupled receptor 1 family. In terms of assembly, monomer. Can form homodimers. Interacts with CD164. Interacts with ARRB2; the interaction is dependent on the C-terminal phosphorylation of CXCR4 and allows activation of MAPK1 and MAPK3. Interacts with ARR3; the interaction is dependent on the C-terminal phosphorylation of CXCR4 and modulates calcium mobilization. Interacts with RNF113A; the interaction, enhanced by CXCL12, promotes CXCR4 ubiquitination and subsequent degradation. Interacts (via the cytoplasmic C-terminal) with ITCH (via the WW domains I and II); the interaction, enhanced by CXCL12, promotes CXCR4 ubiquitination and leads to its degradation. Interacts with extracellular ubiquitin. Interacts with DBN1; this interaction is enhanced by antigenic stimulation. Following LPS binding, may form a complex with GDF5, HSP90AA1 and HSPA8. In terms of processing, phosphorylated on agonist stimulation. Rapidly phosphorylated on serine and threonine residues in the C-terminal. Phosphorylation at Ser-325 and Ser-326 leads to recruitment of ITCH, ubiquitination and protein degradation. Post-translationally, ubiquitinated after ligand binding, leading to its degradation. Ubiquitinated by ITCH at the cell membrane on agonist stimulation. The ubiquitin-dependent mechanism, endosomal sorting complex required for transport (ESCRT), then targets CXCR4 for lysosomal degradation. This process is dependent also on prior Ser-/Thr-phosphorylation in the C-terminal of CXCR4. Also binding of ARRB1 to STAM negatively regulates CXCR4 sorting to lysosomes though modulating ubiquitination of SFR5S. Sulfation is required for efficient binding of CXCL12/SDF-1alpha and promotes its dimerization. In terms of processing, O- and N-glycosylated. N-glycosylation can mask coreceptor function. The O-glycosylation chondroitin sulfate attachment does not affect interaction with CXCL12/SDF-1alpha nor its coreceptor activity.

The protein resides in the cell membrane. Its subcellular location is the cell junction. The protein localises to the early endosome. It localises to the late endosome. It is found in the lysosome. In terms of biological role, receptor for the C-X-C chemokine CXCL12/SDF-1 that transduces a signal by increasing intracellular calcium ion levels and enhancing MAPK1/MAPK3 activation. Involved in the AKT signaling cascade. Plays a role in regulation of cell migration, e.g. during wound healing. Acts as a receptor for extracellular ubiquitin; leading to enhanced intracellular calcium ions and reduced cellular cAMP levels. Binds bacterial lipopolysaccharide (LPS) et mediates LPS-induced inflammatory response, including TNF secretion by monocytes. Involved in hematopoiesis and in cardiac ventricular septum formation. Also plays an essential role in vascularization of the gastrointestinal tract, probably by regulating vascular branching and/or remodeling processes in endothelial cells. Involved in cerebellar development. In the CNS, could mediate hippocampal-neuron survival. This Sus scrofa (Pig) protein is C-X-C chemokine receptor type 4 (CXCR4).